Consider the following 443-residue polypeptide: ATP-dependent protease ATPase subunit HslU (443 aa).

ATP is bound by residues isoleucine 18, 60 to 65, aspartate 256, glutamate 321, and arginine 393; that span reads GVGKTE.

This sequence belongs to the ClpX chaperone family. HslU subfamily. A double ring-shaped homohexamer of HslV is capped on each side by a ring-shaped HslU homohexamer. The assembly of the HslU/HslV complex is dependent on binding of ATP.

The protein localises to the cytoplasm. Functionally, ATPase subunit of a proteasome-like degradation complex; this subunit has chaperone activity. The binding of ATP and its subsequent hydrolysis by HslU are essential for unfolding of protein substrates subsequently hydrolyzed by HslV. HslU recognizes the N-terminal part of its protein substrates and unfolds these before they are guided to HslV for hydrolysis. This is ATP-dependent protease ATPase subunit HslU from Photorhabdus laumondii subsp. laumondii (strain DSM 15139 / CIP 105565 / TT01) (Photorhabdus luminescens subsp. laumondii).